A 332-amino-acid chain; its full sequence is Procathepsin L (332 aa).

The signal sequence occupies residues 1–17; that stretch reads MHPLLFLAGLCLGVASA. Residues 18-112 constitute a propeptide, activation peptide; it reads APQLYQSLDA…KVFQAPFFVE (95 aa). Residue Glu121 coordinates Zn(2+). Cys137 is an active-site residue. Zn(2+)-binding residues include Glu162, Asp183, Glu198, and Asp208. Cysteines 168 and 210 form a disulfide. Asn220 carries an N-linked (GlcNAc...) asparagine glycan. Residues Asp226, Asp249, Asp272, and Asp274 each contribute to the Zn(2+) site. A disulfide bond links Cys268 and Cys321. The active site involves His275. A propeptide spanning residues 288–290 is cleaved from the precursor; the sequence is ETE. Asn299 is an active-site residue.

The protein belongs to the peptidase C1 family. As to quaternary structure, dimer of a heavy and a light chain linked by disulfide bonds. Interacts with Long isoform of CD74/Ii chain; the interaction stabilizes the conformation of mature CTSL. Post-translationally, during export along the endocytic pathway, pro-CTSL undergoes several proteolytic cleavages to generate the CTSL single-chain and two-chain mature forms, composed of a heavy chain linked to a light chain by disulfide bonds. Autocleavage; produces the single-chain CTSL after cleavage of the propeptide. The cleavage can be intermolecular. In terms of tissue distribution, expressed in the endometrium.

The protein resides in the lysosome. Its subcellular location is the apical cell membrane. It localises to the cytoplasmic vesicle. The protein localises to the secretory vesicle. It is found in the chromaffin granule. The protein resides in the secreted. Its subcellular location is the extracellular space. It catalyses the reaction Specificity close to that of papain. As compared to cathepsin B, cathepsin L exhibits higher activity toward protein substrates, but has little activity on Z-Arg-Arg-NHMec, and no peptidyl-dipeptidase activity.. Its activity is regulated as follows. Inhibited by the propeptide produced by autocleavage. Long isoform of CD74/Ii chain stabilizes the conformation of mature CTSL by binding to its active site and serving as a chaperone to help maintain a pool of mature enzyme in endocytic compartments and extracellular space of APCs. IFNG enhances the conversion into the CTSL mature and active form. Inhibited by CST6. Inhibited by the glycopeptide antibiotic teicoplanin. Inhibited by amantadine. In terms of biological role, thiol protease important for the overall degradation of proteins in lysosomes. Plays a critical for normal cellular functions such as general protein turnover, antigen processing and bone remodeling. Involved in the solubilization of cross-linked TG/thyroglobulin and in the subsequent release of thyroid hormone thyroxine (T4) by limited proteolysis of TG/thyroglobulin in the thyroid follicle lumen. In neuroendocrine chromaffin cells secretory vesicles, catalyzes the prohormone proenkephalin processing to the active enkephalin peptide neurotransmitter. In thymus, regulates CD4(+) T cell positive selection by generating the major histocompatibility complex class II (MHCII) bound peptide ligands presented by cortical thymic epithelial cells. Also mediates invariant chain processing in cortical thymic epithelial cells. Major elastin-degrading enzyme at neutral pH. Accumulates as a mature and active enzyme in the extracellular space of antigen presenting cells (APCs) to regulate degradation of the extracellular matrix in the course of inflammation. Secreted form generates endostatin from COL18A1. Critical for cardiac morphology and function. Plays an important role in hair follicle morphogenesis and cycling, as well as epidermal differentiation. Required for maximal stimulation of steroidogenesis by TIMP1. The chain is Procathepsin L (CTSL) from Felis catus (Cat).